A 145-amino-acid chain; its full sequence is Transmembrane protein CCDC163 (145 aa).

Residues 38–54 traverse the membrane as a helical segment; sequence LIGLCICFFCSSGCIFL.

The protein resides in the membrane. The protein is Transmembrane protein CCDC163 of Homo sapiens (Human).